A 252-amino-acid polypeptide reads, in one-letter code: 5'-nucleotidase SurE (252 aa).

Asp-8, Asp-9, Ser-40, and Asn-92 together coordinate a divalent metal cation.

Belongs to the SurE nucleotidase family. A divalent metal cation is required as a cofactor.

Its subcellular location is the cytoplasm. It carries out the reaction a ribonucleoside 5'-phosphate + H2O = a ribonucleoside + phosphate. Functionally, nucleotidase that shows phosphatase activity on nucleoside 5'-monophosphates. This Mesorhizobium japonicum (strain LMG 29417 / CECT 9101 / MAFF 303099) (Mesorhizobium loti (strain MAFF 303099)) protein is 5'-nucleotidase SurE.